The primary structure comprises 224 residues: 7-cyano-7-deazaguanine synthase (224 aa).

ATP is bound at residue leucine 10–valine 20. Zn(2+)-binding residues include cysteine 189, cysteine 199, cysteine 202, and cysteine 205.

This sequence belongs to the QueC family. Zn(2+) serves as cofactor.

It carries out the reaction 7-carboxy-7-deazaguanine + NH4(+) + ATP = 7-cyano-7-deazaguanine + ADP + phosphate + H2O + H(+). The protein operates within purine metabolism; 7-cyano-7-deazaguanine biosynthesis. Its function is as follows. Catalyzes the ATP-dependent conversion of 7-carboxy-7-deazaguanine (CDG) to 7-cyano-7-deazaguanine (preQ(0)). This Ectopseudomonas mendocina (strain ymp) (Pseudomonas mendocina) protein is 7-cyano-7-deazaguanine synthase.